Here is a 656-residue protein sequence, read N- to C-terminus: Protein arginine N-methyltransferase 7 (656 aa).

2 SAM-dependent MTase PRMT-type domains span residues Glu-12–Trp-338 and Gly-343–Asn-656.

Belongs to the class I-like SAM-binding methyltransferase superfamily. Protein arginine N-methyltransferase family. PRMT7 subfamily.

In terms of biological role, arginine methyltransferase that can both catalyze the formation of omega-N monomethylarginine (MMA) and symmetrical dimethylarginine (sDMA). This is Protein arginine N-methyltransferase 7 (prmt-7) from Caenorhabditis briggsae.